A 234-amino-acid chain; its full sequence is MLRFSDVKYRYYTDLFEFDLNVEQGSVVAILGPSGAGKSTLLSLLAGFIEPESGDITINNESQLSLAPHQRPLSMLFQEHNLFAHLSVAENIGLGIKPNLRLNEKDKKRINDAARQVGVDDLLQRLPEQLSGGQKQRVALARCLVQQKPVLLLDEPFSALDPILREEMIVLIQALIKSEKLTVLMVTHSLQDAKALASHYAFICQQKVLSQGRISELFTQEKPPELTQYLQAVK.

Residues 2-230 (LRFSDVKYRY…EKPPELTQYL (229 aa)) form the ABC transporter domain. Residue 32–39 (GPSGAGKS) coordinates ATP.

Belongs to the ABC transporter superfamily. Thiamine importer (TC 3.A.1.19.1) family. As to quaternary structure, the complex is composed of two ATP-binding proteins (ThiQ), two transmembrane proteins (ThiP) and a solute-binding protein (ThiB).

The protein resides in the cell inner membrane. The enzyme catalyses thiamine(out) + ATP + H2O = thiamine(in) + ADP + phosphate + H(+). Part of the ABC transporter complex ThiBPQ involved in thiamine import. Responsible for energy coupling to the transport system. The sequence is that of Thiamine import ATP-binding protein ThiQ from Aliivibrio fischeri (strain ATCC 700601 / ES114) (Vibrio fischeri).